Here is a 383-residue protein sequence, read N- to C-terminus: Delta(12) acyl-lipid conjugase (11E,13E-forming) (383 aa).

The segment at Met-1 to Pro-30 is disordered. A compositionally biased stretch (basic and acidic residues) spans Thr-12–His-26. A run of 2 helical transmembrane segments spans residues Val-56–Met-76 and Val-84–Gly-104. The Histidine box-1 motif lies at His-105–His-109. A Histidine box-2 motif is present at residues His-141–His-145. 3 helical membrane passes run Phe-179–Asn-199, Val-225–Ala-245, and Val-249–Ile-269. The Histidine box-3 motif lies at His-315–His-319.

It belongs to the fatty acid desaturase type 1 family. Expressed in developing seeds, but not in leaves.

It is found in the membrane. The enzyme catalyses a (9Z,12Z)-octadecadienoyl-containing glycerolipid + 2 Fe(II)-[cytochrome b5] + O2 + 2 H(+) = a (9Z,11E,13E)-octadecatrienoyl-containing glycerolipid + 2 Fe(III)-[cytochrome b5] + 2 H2O. It carries out the reaction (9Z,12Z,15Z)-octadecatrienoyl-containing glycerolipid + 2 Fe(II)-[cytochrome b5] + O2 + 2 H(+) = a (9Z,11E,13E,15Z)-octadecatetraenoyl-containing glycerolipid + 2 Fe(III)-[cytochrome b5] + 2 H2O. Its pathway is lipid metabolism; polyunsaturated fatty acid biosynthesis. Functionally, converts linoleic acid to alpha-eleostearic acid (18:3(9Z,11E,13E)) and alpha-linolenic acid to alpha-parinaric acid (18:4(9Z,11E, 13E, 15Z)). Converts a single cis double bond at carbon 12 to two conjugated trans bonds at positions 11 and 13. The polypeptide is Delta(12) acyl-lipid conjugase (11E,13E-forming) (Impatiens balsamina (Balsam)).